A 551-amino-acid polypeptide reads, in one-letter code: Putative ABC transporter ATP-binding protein BT9727_3105 (551 aa).

2 consecutive ABC transporter domains span residues 5–243 (AEIN…FRPF) and 293–525 (LSAE…SINR). ATP is bound by residues 39–46 (GGSGSGKT) and 327–334 (GKNGTGKS).

Belongs to the ABC transporter superfamily.

Its subcellular location is the cell membrane. Probably part of an ABC transporter complex. Responsible for energy coupling to the transport system. In Bacillus thuringiensis subsp. konkukian (strain 97-27), this protein is Putative ABC transporter ATP-binding protein BT9727_3105.